The primary structure comprises 176 residues: NAD(P)H-quinone oxidoreductase subunit 6, chloroplastic (176 aa).

The next 5 helical transmembrane spans lie at isoleucine 10–threonine 30, proline 32–proline 52, alanine 61–methionine 81, leucine 92–isoleucine 112, and phenylalanine 152–serine 172.

The protein belongs to the complex I subunit 6 family. In terms of assembly, NDH is composed of at least 16 different subunits, 5 of which are encoded in the nucleus.

The protein localises to the plastid. Its subcellular location is the chloroplast thylakoid membrane. The enzyme catalyses a plastoquinone + NADH + (n+1) H(+)(in) = a plastoquinol + NAD(+) + n H(+)(out). It catalyses the reaction a plastoquinone + NADPH + (n+1) H(+)(in) = a plastoquinol + NADP(+) + n H(+)(out). In terms of biological role, NDH shuttles electrons from NAD(P)H:plastoquinone, via FMN and iron-sulfur (Fe-S) centers, to quinones in the photosynthetic chain and possibly in a chloroplast respiratory chain. The immediate electron acceptor for the enzyme in this species is believed to be plastoquinone. Couples the redox reaction to proton translocation, and thus conserves the redox energy in a proton gradient. This chain is NAD(P)H-quinone oxidoreductase subunit 6, chloroplastic (ndhG), found in Liriodendron tulipifera (Tuliptree).